The chain runs to 2148 residues: Polyketide synthase 1 (2148 aa).

The segment at 19 to 261 (FIFGDQSSCN…TPLAVHAPYH (243 aa)) is N-terminal acylcarrier protein transacylase domain (SAT). The Ketosynthase family 3 (KS3) domain occupies 394 to 829 (ESKIAIIGMS…GGNTALLVED (436 aa)). Catalysis depends on for beta-ketoacyl synthase activity residues C566, H701, and H745. The tract at residues 929–1233 (AFVFSGQGSQ…PSLMRNKDGW (305 aa)) is malonyl-CoA:ACP transacylase (MAT) domain. S1018 (for acyl/malonyl transferase activity) is an active-site residue. The tract at residues 1310–1624 (TASVHRIVHE…RKVLNTAMPP (315 aa)) is product template (PT) domain. Positions 1314 to 1447 (HRIVHESVDK…SSLHFEQPKV (134 aa)) are N-terminal hotdog fold. In terms of domain architecture, PKS/mFAS DH spans 1314–1619 (HRIVHESVDK…FQGIPRKVLN (306 aa)). H1346 acts as the Proton acceptor; for dehydratase activity in catalysis. The tract at residues 1474 to 1619 (LNSRMSSGVI…FQGIPRKVLN (146 aa)) is C-terminal hotdog fold. D1533 acts as the Proton donor; for dehydratase activity in catalysis. The tract at residues 1619 to 1657 (NTAMPPPKSQNEAPVRSAPAKPAAKPPKSASSEHSGHFA) is disordered. The segment covering 1635-1650 (SAPAKPAAKPPKSASS) has biased composition (low complexity). The 75-residue stretch at 1678–1752 (RNPMLAVFKI…DLATHLGLDT (75 aa)) folds into the Carrier 1 domain. Position 1712 is an O-(pantetheine 4'-phosphoryl)serine (S1712). A compositionally biased stretch (low complexity) spans 1755 to 1790 (SDQSSGQSSSSGGLSPRSDSIGEITSSATTPPSLSP). Positions 1755–1796 (SDQSSGQSSSSGGLSPRSDSIGEITSSATTPPSLSPRGSVSG) are disordered. The Carrier 2 domain occupies 1793–1870 (SVSGSQCKDV…SFKHMFQQGH (78 aa)). S1830 is subject to O-(pantetheine 4'-phosphoryl)serine. A thioesterase (TE) domain region spans residues 1882-2146 (LKQYRATSTL…ERVAAFIRST (265 aa)). Residue S1973 is the For thioesterase activity of the active site.

Polyketide synthase; part of the Pks1 gene cluster that mediates the biosynthesis of an anthraquinone derivative pigment that contributes to conidial pigmentation that provides protection from UV radiation, heat and cold stress. The polyketide synthase Pks1 produces 1-acetyl-2,4,6,8-tetrahydroxy-9,10-anthraquinone though condensation of acetyl-CoA with malonyl-CoA. The dehydratase EthD and the laccase Mlac1 further convert the anthraquinone derivative into the final conidial pigment. This is Polyketide synthase 1 from Metarhizium guizhouense (strain ARSEF 977).